The following is a 244-amino-acid chain: Putative lipoprotein LprA (244 aa).

A signal peptide spans 1 to 24 (MKHPPCSVVAAATAILAVVLAIGG). Cys-25 carries N-palmitoyl cysteine lipidation. A lipid anchor (S-diacylglycerol cysteine) is attached at Cys-25.

It belongs to the LppX/LprAFG lipoprotein family.

Its subcellular location is the cell membrane. This Mycobacterium bovis (strain ATCC BAA-935 / AF2122/97) protein is Putative lipoprotein LprA (lprA).